We begin with the raw amino-acid sequence, 335 residues long: Dihydroorotate dehydrogenase (quinone) (335 aa).

FMN contacts are provided by residues 59–63 and Thr-83; that span reads AGADK. Position 63 (Lys-63) interacts with substrate. 108-112 serves as a coordination point for substrate; that stretch reads NRNGF. FMN contacts are provided by Asn-136 and Asn-169. Substrate is bound at residue Asn-169. Catalysis depends on Ser-172, which acts as the Nucleophile. Asn-174 serves as a coordination point for substrate. FMN contacts are provided by Lys-214 and Gly-242. 243 to 244 contributes to the substrate binding site; that stretch reads NT. FMN-binding positions include Gly-265, Gly-294, and 315-316; that span reads YS.

Belongs to the dihydroorotate dehydrogenase family. Type 2 subfamily. Monomer. FMN serves as cofactor.

Its subcellular location is the cell membrane. It carries out the reaction (S)-dihydroorotate + a quinone = orotate + a quinol. Its pathway is pyrimidine metabolism; UMP biosynthesis via de novo pathway; orotate from (S)-dihydroorotate (quinone route): step 1/1. Its function is as follows. Catalyzes the conversion of dihydroorotate to orotate with quinone as electron acceptor. This is Dihydroorotate dehydrogenase (quinone) from Glaesserella parasuis serovar 5 (strain SH0165) (Haemophilus parasuis).